Here is a 375-residue protein sequence, read N- to C-terminus: DNA replication and repair protein RecF (375 aa).

30–37 (GDNAQGKT) contributes to the ATP binding site.

The protein belongs to the RecF family.

It is found in the cytoplasm. In terms of biological role, the RecF protein is involved in DNA metabolism; it is required for DNA replication and normal SOS inducibility. RecF binds preferentially to single-stranded, linear DNA. It also seems to bind ATP. In Symbiobacterium thermophilum (strain DSM 24528 / JCM 14929 / IAM 14863 / T), this protein is DNA replication and repair protein RecF.